The primary structure comprises 171 residues: Large ribosomal subunit protein uL10 (171 aa).

This sequence belongs to the universal ribosomal protein uL10 family. In terms of assembly, part of the ribosomal stalk of the 50S ribosomal subunit. The N-terminus interacts with L11 and the large rRNA to form the base of the stalk. The C-terminus forms an elongated spine to which L12 dimers bind in a sequential fashion forming a multimeric L10(L12)X complex.

Its function is as follows. Forms part of the ribosomal stalk, playing a central role in the interaction of the ribosome with GTP-bound translation factors. The polypeptide is Large ribosomal subunit protein uL10 (Cereibacter sphaeroides (strain ATCC 17023 / DSM 158 / JCM 6121 / CCUG 31486 / LMG 2827 / NBRC 12203 / NCIMB 8253 / ATH 2.4.1.) (Rhodobacter sphaeroides)).